The primary structure comprises 278 residues: Trehalose monomycolate transport factor A (278 aa).

Position 1 (Met1) is a topological domain, periplasmic. The chain crosses the membrane as a helical span at residues Val2–Val22. Over Asp23 to Arg278 the chain is Cytoplasmic. The interval Pro200–Arg278 is disordered. Residues Asn269 to Arg278 show a composition bias toward basic and acidic residues.

In terms of assembly, monomer. Interacts (via N-terminus) with MmpL3; active trehalose monomycolate (TMM) biosynthesis is not required for the complex formation. Interacts with MSMEG_5308.

The protein resides in the cell inner membrane. It is found in the cell septum. Its subcellular location is the cell tip. Functionally, required for MmpL3-dependent trehalose monomycolate (TMM) transport to the cell wall. Required for growth and cell elongation. The polypeptide is Trehalose monomycolate transport factor A (Mycolicibacterium smegmatis (strain ATCC 700084 / mc(2)155) (Mycobacterium smegmatis)).